A 307-amino-acid chain; its full sequence is MTPIVAVVGATGTGKSALSLDIAERLRAEGRAAEIVNADAMQLYRGMDIGTAKLPEVGRRGVPHHMLDVLDVTAEATVAAYQEEARRAIGGILERGAVPILVGGSGLYVSSVLFDYDFPGTDPEIRQRLERELEATGPGMIHRRLRELDPVAAQRIGAHNGRRLVRALEVVEITGPQPERATAEPRPWHPARILALTLPREELVPRLDARVSGMWRDGLVDEVAGLLSAGLADGVTASRAIGYAQAARQLAGELSEEEAMEETRALTRRYARRQVSWFGRYADAVRLDARDDRLLEHALDALPAARP.

9–16 is an ATP binding site; sequence GATGTGKS. Residue 11–16 participates in substrate binding; sequence TGTGKS.

The protein belongs to the IPP transferase family. As to quaternary structure, monomer. Requires Mg(2+) as cofactor.

It carries out the reaction adenosine(37) in tRNA + dimethylallyl diphosphate = N(6)-dimethylallyladenosine(37) in tRNA + diphosphate. Catalyzes the transfer of a dimethylallyl group onto the adenine at position 37 in tRNAs that read codons beginning with uridine, leading to the formation of N6-(dimethylallyl)adenosine (i(6)A). This Clavibacter sepedonicus (Clavibacter michiganensis subsp. sepedonicus) protein is tRNA dimethylallyltransferase.